A 259-amino-acid chain; its full sequence is Hemin import ATP-binding protein HmuV (259 aa).

An ABC transporter domain is found at 6 to 242; that stretch reads IQGRDLCVTY…ERIEQVYGYQ (237 aa). Residue 38–45 participates in ATP binding; that stretch reads GPNGAGKS.

This sequence belongs to the ABC transporter superfamily. Heme (hemin) importer (TC 3.A.1.14.5) family. The complex is composed of two ATP-binding proteins (HmuV), two transmembrane proteins (HmuU) and a solute-binding protein (HmuT).

Its subcellular location is the cell inner membrane. Functionally, part of the ABC transporter complex HmuTUV involved in hemin import. Responsible for energy coupling to the transport system. The protein is Hemin import ATP-binding protein HmuV of Vibrio cholerae serotype O1 (strain ATCC 39315 / El Tor Inaba N16961).